Consider the following 130-residue polypeptide: Small ribosomal subunit protein uS9 (130 aa).

The protein belongs to the universal ribosomal protein uS9 family.

In Pseudomonas fluorescens (strain Pf0-1), this protein is Small ribosomal subunit protein uS9.